Reading from the N-terminus, the 337-residue chain is Thiazole synthase (337 aa).

The segment at 1-41 is disordered; that stretch reads MSQHPLRPAGSRPGDSPPDGSCPDGLAGGGSAVGGGGGGEA. The span at 10–25 shows a compositional bias: low complexity; sequence GSRPGDSPPDGSCPDG. Residues 26 to 41 show a composition bias toward gly residues; sequence LAGGGSAVGGGGGGEA. Lysine 144 functions as the Schiff-base intermediate with DXP in the catalytic mechanism. Residues glycine 205, 231-232, and 253-254 contribute to the 1-deoxy-D-xylulose 5-phosphate site; these read AG and NT. The interval 302–337 is disordered; it reads FLGAHPSPASHPSPASPVPSVSRATSPAAVVGEASR. The span at 319–337 shows a compositional bias: low complexity; the sequence is VPSVSRATSPAAVVGEASR.

Belongs to the ThiG family. In terms of assembly, homotetramer. Forms heterodimers with either ThiH or ThiS.

It localises to the cytoplasm. It carries out the reaction [ThiS sulfur-carrier protein]-C-terminal-Gly-aminoethanethioate + 2-iminoacetate + 1-deoxy-D-xylulose 5-phosphate = [ThiS sulfur-carrier protein]-C-terminal Gly-Gly + 2-[(2R,5Z)-2-carboxy-4-methylthiazol-5(2H)-ylidene]ethyl phosphate + 2 H2O + H(+). The protein operates within cofactor biosynthesis; thiamine diphosphate biosynthesis. Its function is as follows. Catalyzes the rearrangement of 1-deoxy-D-xylulose 5-phosphate (DXP) to produce the thiazole phosphate moiety of thiamine. Sulfur is provided by the thiocarboxylate moiety of the carrier protein ThiS. In vitro, sulfur can be provided by H(2)S. The polypeptide is Thiazole synthase (Frankia casuarinae (strain DSM 45818 / CECT 9043 / HFP020203 / CcI3)).